A 120-amino-acid polypeptide reads, in one-letter code: Large ribosomal subunit protein uL18 (120 aa).

The protein belongs to the universal ribosomal protein uL18 family. Part of the 50S ribosomal subunit; part of the 5S rRNA/L5/L18/L25 subcomplex. Contacts the 5S and 23S rRNAs.

Its function is as follows. This is one of the proteins that bind and probably mediate the attachment of the 5S RNA into the large ribosomal subunit, where it forms part of the central protuberance. The protein is Large ribosomal subunit protein uL18 of Trichodesmium erythraeum (strain IMS101).